Here is a 491-residue protein sequence, read N- to C-terminus: Cobyric acid synthase (491 aa).

A GATase cobBQ-type domain is found at 253–429; it reads AHRVAVVRLP…WHGSLEGDAL (177 aa). Residue Cys334 is the Nucleophile of the active site. Residue His421 is part of the active site.

Belongs to the CobB/CobQ family. CobQ subfamily.

Its pathway is cofactor biosynthesis; adenosylcobalamin biosynthesis. Functionally, catalyzes amidations at positions B, D, E, and G on adenosylcobyrinic A,C-diamide. NH(2) groups are provided by glutamine, and one molecule of ATP is hydrogenolyzed for each amidation. This Mycobacterium marinum (strain ATCC BAA-535 / M) protein is Cobyric acid synthase.